The following is a 150-amino-acid chain: Protein adenylyltransferase MntA (150 aa).

The GSX(10)DXD motif signature appears at 32–46 (GSRATGNINANSDWD). Residues aspartate 44 and aspartate 46 contribute to the active site. Residues aspartate 44, aspartate 46, and aspartate 86 each contribute to the Mg(2+) site.

The protein belongs to the MntA antitoxin family. In terms of assembly, forms a complex with HepT, probably MntA(1):HepT(2) in vivo; can only be purified when both 'Arg-102' and 'Tyr-109' (or 'His-107' and 'Tyr-109') of HepThave been mutated. The fully di-AMPylated HepT homodimer is not found in a complex with MntA. The cofactor is Mg(2+).

The enzyme catalyses L-tyrosyl-[protein] + ATP = O-(5'-adenylyl)-L-tyrosyl-[protein] + diphosphate. It carries out the reaction O-(5'-adenylyl)-L-tyrosyl-[protein] + ATP = O-[5'-(adenylyl-(5'-&gt;3')-adenylyl)]-L-tyrosyl-[protein] + diphosphate. Antitoxin component of a type VII toxin-antitoxin (TA) system. Upon cloning in E.coli neutralizes the effect of cognate toxin HepT. Neutralization is mostly due to di-AMPylation of toxin by this enzyme. Successively di-AMPylates HepT on 'Tyr-109'. In vitro will use ATP, dATP, GTP, dGTP, TTP or UTP to generate a mono-modified protein, but requires a purine nucleotide for the second modification reaction (ATP, dATP or GTP). The polypeptide is Protein adenylyltransferase MntA (Aphanizomenon flos-aquae (strain 2012/KM1/D3)).